The chain runs to 253 residues: Methionine-R-sulfoxide reductase B3, mitochondrial (253 aa).

Residues Met1–Ala56 form the signal peptide. Lys102 is modified (N6-acetyllysine). The MsrB domain maps to Gln107–Ala229. Positions 146, 149, 195, and 198 each coordinate Zn(2+). Residue Cys218 is the Nucleophile of the active site. A disordered region spans residues Thr227–Leu253. At Ser244 the chain carries Phosphoserine. The short motif at Arg250–Leu253 is the Endoplasmic reticulum retention signal element.

This sequence belongs to the MsrB Met sulfoxide reductase family. Monomer. Zn(2+) is required as a cofactor. Widely expressed. Detected in the sensory epithelia of the organ of Corti and vestibular end organs as early as P2 up to adulthood (at protein level). In the organ of Corti, present in inner and outer hair cells and, to a lesser extent, in supporting cells (at protein level). In hair cells, distributed throughout the cell body. Barely detectable level in stereocilia. Also observed in spiral ganglion neurons, but not in the stria vascularis. In the vestibular end organs, found throughout the sensory epithelium, but more intense expression in hair cells than in supporting cells (at protein level). In vestibular hair cells, present within cell bodies and to a lesser extent in kinocilia. Barely detectable in stereocilia.

It localises to the endoplasmic reticulum. The enzyme catalyses L-methionyl-[protein] + [thioredoxin]-disulfide + H2O = L-methionyl-(R)-S-oxide-[protein] + [thioredoxin]-dithiol. It catalyses the reaction [thioredoxin]-disulfide + L-methionine + H2O = L-methionine (R)-S-oxide + [thioredoxin]-dithiol. Its function is as follows. Catalyzes the reduction of free and protein-bound methionine sulfoxide to methionine. This is Methionine-R-sulfoxide reductase B3, mitochondrial (Msrb3) from Mus musculus (Mouse).